We begin with the raw amino-acid sequence, 227 residues long: Cytochrome c oxidase subunit 2 (227 aa).

The Mitochondrial intermembrane segment spans residues 1-14 (MAHPVQLGLQDATS). Residues 15-45 (PVMEELITFHDQALMAMFLISFLILYALSST) form a helical membrane-spanning segment. Over 46 to 59 (LTTKLTNTNITDAQ) the chain is Mitochondrial matrix. A helical transmembrane segment spans residues 60 to 87 (EMETIWTILPAVILILIALPSLRILYMT). At 88-227 (DEINNPSFTI…IFEMGPVFTL (140 aa)) the chain is on the mitochondrial intermembrane side. 6 residues coordinate Cu cation: H161, C196, E198, C200, H204, and M207. A Mg(2+)-binding site is contributed by E198.

Belongs to the cytochrome c oxidase subunit 2 family. As to quaternary structure, component of the cytochrome c oxidase (complex IV, CIV), a multisubunit enzyme composed of 14 subunits. The complex is composed of a catalytic core of 3 subunits MT-CO1, MT-CO2 and MT-CO3, encoded in the mitochondrial DNA, and 11 supernumerary subunits COX4I, COX5A, COX5B, COX6A, COX6B, COX6C, COX7A, COX7B, COX7C, COX8 and NDUFA4, which are encoded in the nuclear genome. The complex exists as a monomer or a dimer and forms supercomplexes (SCs) in the inner mitochondrial membrane with NADH-ubiquinone oxidoreductase (complex I, CI) and ubiquinol-cytochrome c oxidoreductase (cytochrome b-c1 complex, complex III, CIII), resulting in different assemblies (supercomplex SCI(1)III(2)IV(1) and megacomplex MCI(2)III(2)IV(2)). Found in a complex with TMEM177, COA6, COX18, COX20, SCO1 and SCO2. Interacts with TMEM177 in a COX20-dependent manner. Interacts with COX20. Interacts with COX16. Requires Cu cation as cofactor.

Its subcellular location is the mitochondrion inner membrane. It catalyses the reaction 4 Fe(II)-[cytochrome c] + O2 + 8 H(+)(in) = 4 Fe(III)-[cytochrome c] + 2 H2O + 4 H(+)(out). Its function is as follows. Component of the cytochrome c oxidase, the last enzyme in the mitochondrial electron transport chain which drives oxidative phosphorylation. The respiratory chain contains 3 multisubunit complexes succinate dehydrogenase (complex II, CII), ubiquinol-cytochrome c oxidoreductase (cytochrome b-c1 complex, complex III, CIII) and cytochrome c oxidase (complex IV, CIV), that cooperate to transfer electrons derived from NADH and succinate to molecular oxygen, creating an electrochemical gradient over the inner membrane that drives transmembrane transport and the ATP synthase. Cytochrome c oxidase is the component of the respiratory chain that catalyzes the reduction of oxygen to water. Electrons originating from reduced cytochrome c in the intermembrane space (IMS) are transferred via the dinuclear copper A center (CU(A)) of subunit 2 and heme A of subunit 1 to the active site in subunit 1, a binuclear center (BNC) formed by heme A3 and copper B (CU(B)). The BNC reduces molecular oxygen to 2 water molecules using 4 electrons from cytochrome c in the IMS and 4 protons from the mitochondrial matrix. The protein is Cytochrome c oxidase subunit 2 (MT-CO2) of Papio anubis (Olive baboon).